We begin with the raw amino-acid sequence, 316 residues long: CXXC-type zinc finger protein 5 (316 aa).

Residues 1–10 (MSSLGGGSQD) show a composition bias toward gly residues. The disordered stretch occupies residues 1-95 (MSSLGGGSQD…SGGAGSMMGG (95 aa)). Low complexity-rich tracts occupy residues 11-27 (AGGS…SGSG) and 36-50 (SATV…VADD). A CXXC-type zinc finger spans residues 250–291 (GKKKRKRCGMCAPCRRRINCEQCSSCRNRKTGHQICKFRKCE). The Nuclear localization signal signature appears at 251 to 256 (KKKRKR). Positions 257, 260, 263, 269, 272, 275, 285, and 290 each coordinate Zn(2+).

As to quaternary structure, interacts with DVL1. Interacts with RBPJ. As to expression, expressed in neural stem cells (at protein level). Expressed in the dorsal telencephalon.

The protein resides in the nucleus. It is found in the cytoplasm. Functionally, may indirectly participate in activation of the NF-kappa-B and MAPK pathways. Required for DNA damage-induced ATM phosphorylation, p53 activation and cell cycle arrest. Involved in myelopoiesis. Acts as a mediator of BMP4-mediated modulation of canonical Wnt signaling activity in neural stem cells. Binds to the oxygen responsive element of COX4I2 and represses its transcription under hypoxia conditions (4% oxygen), as well as normoxia conditions (20% oxygen). May repress COX4I2 transactivation induced by CHCHD2 and RBPJ. Binds preferentially to DNA containing cytidine-phosphate-guanosine (CpG) dinucleotides over CpH (H=A, T, and C), hemimethylated-CpG and hemimethylated-hydroxymethyl-CpG. The protein is CXXC-type zinc finger protein 5 (Cxxc5) of Rattus norvegicus (Rat).